The primary structure comprises 474 residues: Dipeptidase A (474 aa).

Cys-6 is a catalytic residue.

The protein belongs to the peptidase C69 family. Homooctamer.

The catalysed reaction is an L-aminoacyl-L-amino acid + H2O = 2 an L-alpha-amino acid. With respect to regulation, inhibited by Zn(2+), Cu(2+), Ca(2+) and Cd(2+). Functionally, hydrolyzes a wide range of dipeptides but unable to hydrolyze dipeptides containing proline. Highest activity against Met-Ala. The sequence is that of Dipeptidase A (pepDA) from Lactobacillus helveticus (Lactobacillus suntoryeus).